Consider the following 586-residue polypeptide: MFKVIKCNELNEKLIDKKVEINAWVKKIRHHGKFIFLNIRDRYEKAQVLVNEEKLLKIAEKIKLEYCIKIQGLLIKRPPNMINANMKTGHFEILAKNIEIISKCNELPFMIEDDNNASENSKLEYRYLDLRRDSLKNKIILRCQATHLIRNFLIKRKFLELETPTFVKSTPEGARDFVIPSRIHKGSFYALPQSPQLYKQLIMIAGFDKYFQIARCYRDEDSRGDRQPEFTQLDLEMSFVKKENIFKLIENMLFLIFKNCININLPKKFKKITYKKAMNKYGSDKPDTRFELELQDISRNLKNSEFNIFKDTLKNKGSIKILIVKDKADKFSRAKINNLEEIAKLYKTQGLYFTKIENNKFSGGIAKFLKTEEQELIKTYSLENNDIIFFTANNNWETACKAMGQIRIKIANDLGLIDENKFEFLWVYDFPLFEYDENTKTYSPAHHMFSLPKKQYIANLEKNPKKTIGEIYDLVLNGVELGSGSIRIHNKELQQRIFKIIGFQKEKSEDRFGFFLKALEYGAPNHGGIAIGIDRLIMLMTKSTSIKDVILFPKNSFAASPLDNSPSKISNEQLKELGINIVDGDN.

Residue Glu-172 participates in L-aspartate binding. Positions 196-199 (QLYK) are aspartate. Arg-218 provides a ligand contact to L-aspartate. ATP contacts are provided by residues 218-220 (RDE) and Gln-227. His-446 provides a ligand contact to L-aspartate. An ATP-binding site is contributed by Glu-480. Position 487 (Arg-487) interacts with L-aspartate. 532–535 (GIDR) contacts ATP.

This sequence belongs to the class-II aminoacyl-tRNA synthetase family. Type 1 subfamily. As to quaternary structure, homodimer.

It localises to the cytoplasm. It catalyses the reaction tRNA(Asx) + L-aspartate + ATP = L-aspartyl-tRNA(Asx) + AMP + diphosphate. Its function is as follows. Aspartyl-tRNA synthetase with relaxed tRNA specificity since it is able to aspartylate not only its cognate tRNA(Asp) but also tRNA(Asn). Reaction proceeds in two steps: L-aspartate is first activated by ATP to form Asp-AMP and then transferred to the acceptor end of tRNA(Asp/Asn). This Borreliella burgdorferi (strain ATCC 35210 / DSM 4680 / CIP 102532 / B31) (Borrelia burgdorferi) protein is Aspartate--tRNA(Asp/Asn) ligase.